Reading from the N-terminus, the 411-residue chain is Putative competence-damage inducible protein (411 aa).

The protein belongs to the CinA family.

The protein is Putative competence-damage inducible protein of Caldicellulosiruptor bescii (strain ATCC BAA-1888 / DSM 6725 / KCTC 15123 / Z-1320) (Anaerocellum thermophilum).